The following is a 204-amino-acid chain: Large ribosomal subunit protein uL4 (204 aa).

The disordered stretch occupies residues 49-75 (TKGRSDVSGGGKKPWRQKGRGGARAGS).

It belongs to the universal ribosomal protein uL4 family. In terms of assembly, part of the 50S ribosomal subunit.

One of the primary rRNA binding proteins, this protein initially binds near the 5'-end of the 23S rRNA. It is important during the early stages of 50S assembly. It makes multiple contacts with different domains of the 23S rRNA in the assembled 50S subunit and ribosome. Its function is as follows. Forms part of the polypeptide exit tunnel. The sequence is that of Large ribosomal subunit protein uL4 from Campylobacter lari (strain RM2100 / D67 / ATCC BAA-1060).